The primary structure comprises 245 residues: Anti-Pycsar protein Apyc1 (245 aa).

The tract at residues 19-219 is beta-lactamase-like; that stretch reads FNNNALLYAG…EIQSQILLKH (201 aa). Zn(2+) is bound by residues histidine 61, histidine 63, aspartate 65, histidine 66, histidine 145, aspartate 165, and histidine 219.

It belongs to the anti-Pycsar protein Apyc1 family. In terms of assembly, homodimer. It depends on Zn(2+) as a cofactor.

The catalysed reaction is 3',5'-cyclic CMP + H2O = CMP + H(+). The enzyme catalyses 3',5'-cyclic UMP + H2O = UMP + H(+). Functionally, counteracts the endogenous Pycsar antiviral defense system. Phosphodiesterase that enables metal-dependent hydrolysis of host cyclic nucleotide Pycsar defense signals such as cCMP and cUMP. This chain is Anti-Pycsar protein Apyc1, found in Paenibacillus sp. (strain J14).